Consider the following 911-residue polypeptide: Isoleucine--tRNA ligase (911 aa).

The 'HIGH' region motif lies at 57 to 67 (PYANGHIHIGH). L-isoleucyl-5'-AMP is bound at residue glutamate 564. A 'KMSKS' region motif is present at residues 605–609 (KMSKS). Lysine 608 provides a ligand contact to ATP. Residues cysteine 887, cysteine 890, cysteine 902, and cysteine 905 each contribute to the Zn(2+) site.

It belongs to the class-I aminoacyl-tRNA synthetase family. IleS type 1 subfamily. As to quaternary structure, monomer. The cofactor is Zn(2+).

It localises to the cytoplasm. It carries out the reaction tRNA(Ile) + L-isoleucine + ATP = L-isoleucyl-tRNA(Ile) + AMP + diphosphate. Functionally, catalyzes the attachment of isoleucine to tRNA(Ile). As IleRS can inadvertently accommodate and process structurally similar amino acids such as valine, to avoid such errors it has two additional distinct tRNA(Ile)-dependent editing activities. One activity is designated as 'pretransfer' editing and involves the hydrolysis of activated Val-AMP. The other activity is designated 'posttransfer' editing and involves deacylation of mischarged Val-tRNA(Ile). The protein is Isoleucine--tRNA ligase of Nautilia profundicola (strain ATCC BAA-1463 / DSM 18972 / AmH).